The sequence spans 187 residues: MNLTNHFLVAMPGMKDPYFQHSVIYICEHNEEGAMGLMINAPIDITVGKMLEQVDVQPVHPQLNTSSLTKPVYNGGPVAEDRGFILHRPKDFYESSLQMTEQISVTTSKDILTVLGTEAEPSSYIVALGYSGWSAGQLEAELAENSWLTVEANPDIIFDTPIAMRWQKAVQMLGIHASQLSDQAGHA.

It belongs to the UPF0301 (AlgH) family.

The chain is UPF0301 protein VV2869 from Vibrio vulnificus (strain YJ016).